Here is an 86-residue protein sequence, read N- to C-terminus: MKKLTKTNLKYKKQSLKIGDLVEIIAGNDKKKQGTVKAIIKSQEKVIVEGINQRFKHIKPQRSNETGKINQFEAPIHRSNVKKINN.

It belongs to the universal ribosomal protein uL24 family. Part of the 50S ribosomal subunit.

The protein localises to the plastid. It localises to the chloroplast. Its function is as follows. One of two assembly initiator proteins, it binds directly to the 5'-end of the 23S rRNA, where it nucleates assembly of the 50S subunit. The protein is Large ribosomal subunit protein uL24c (rpl24) of Heterosigma akashiwo (strain NIES-293 / 8280G21-1).